We begin with the raw amino-acid sequence, 313 residues long: Small ribosomal subunit protein uS2 (313 aa).

Positions 228–256 are enriched in basic and acidic residues; it reads RQEDKAAEAQDKDAQDTEDNKGARPRGAE. A disordered region spans residues 228–313; the sequence is RQEDKAAEAQ…VSKAGDKPKK (86 aa).

This sequence belongs to the universal ribosomal protein uS2 family.

In Amoebophilus asiaticus (strain 5a2), this protein is Small ribosomal subunit protein uS2.